Reading from the N-terminus, the 351-residue chain is MFKRFSKKKEAPEDPKNLINIDKPIKELPASIAIPKEKPLTGEQQKMYDEVLKHFSNPDLKVYTSEKNKSEDDLKPLEEEEKAWLTRECFLRYLRATKWVLKDCIDRITMTLAWRREFGISHLGEEHGDKITADLVAVENESGKQVILGYENDARPILYLKPGRQNTKTSHRQVQHLVFMLERVIDFMPAGQDSLALLIDFKDYPDVPKVPGNSKIPPIGVGKEVLHILQTHYPERLGKALLTNIPWLAWTFLKLIHPFIDPLTREKLVFDEPFVKYVPKNELDSLYGGDLKFKYNHDVYWPALVETAREKRDHYFKRFQSFGGIVGLSEVDLRGTHEKLLYPVKSESSTV.

Residues 135–295 form the CRAL-TRIO domain; it reads LVAVENESGK…LYGGDLKFKY (161 aa).

In terms of assembly, homodimer. Apo-SFH3 forms a dimer through the hydrophobic interaction of gating helices. Binding of phosphatidylinositol leads to dissociation of the dimer into monomers in a reversible manner.

The protein localises to the lipid droplet. The protein resides in the microsome membrane. It localises to the endoplasmic reticulum membrane. The enzyme catalyses a 1,2-diacyl-sn-glycero-3-phospho-(1D-myo-inositol)(in) = a 1,2-diacyl-sn-glycero-3-phospho-(1D-myo-inositol)(out). Has phosphatidylinositol transfer activity. Involved in the regulation of the phospholipid composition of plasma- and endomembranes. Altering plasma membrane composition may provide a possible mechanism for multidrug resistance. Involved in the regulation of sterol biosynthesis. Contributes to efficient phospholipase D1 activation in the regulation of phospholipid turnover. Regulates the release of fatty acids from lipid droplets. The sequence is that of Phosphatidylinositol transfer protein PDR16 (PDR16) from Saccharomyces cerevisiae (strain ATCC 204508 / S288c) (Baker's yeast).